Here is a 249-residue protein sequence, read N- to C-terminus: Uridylate kinase (249 aa).

Residue 15 to 18 (KLSG) participates in ATP binding. Residues 23–28 (GDEGFG) form an involved in allosteric activation by GTP region. G57 serves as a coordination point for UMP. Residues G58 and R62 each contribute to the ATP site. Residues D77 and 138–145 (TGNPFFTT) each bind UMP. ATP contacts are provided by T165, Y171, and D174.

The protein belongs to the UMP kinase family. In terms of assembly, homohexamer.

The protein resides in the cytoplasm. It carries out the reaction UMP + ATP = UDP + ADP. It functions in the pathway pyrimidine metabolism; CTP biosynthesis via de novo pathway; UDP from UMP (UMPK route): step 1/1. With respect to regulation, allosterically activated by GTP. Inhibited by UTP. In terms of biological role, catalyzes the reversible phosphorylation of UMP to UDP. This Pseudoalteromonas translucida (strain TAC 125) protein is Uridylate kinase.